Here is a 611-residue protein sequence, read N- to C-terminus: Glutamine--fructose-6-phosphate aminotransferase [isomerizing] (611 aa).

Residue cysteine 2 is the Nucleophile; for GATase activity of the active site. A Glutamine amidotransferase type-2 domain is found at 2–219 (CGIVGAVAER…EGDIAEIRRD (218 aa)). 2 SIS domains span residues 287–427 (AAEL…VKGS) and 460–601 (VAEL…VDQP). Lysine 606 (for Fru-6P isomerization activity) is an active-site residue.

Homodimer.

The protein localises to the cytoplasm. The enzyme catalyses D-fructose 6-phosphate + L-glutamine = D-glucosamine 6-phosphate + L-glutamate. Functionally, catalyzes the first step in hexosamine metabolism, converting fructose-6P into glucosamine-6P using glutamine as a nitrogen source. In Pseudomonas syringae pv. tomato (strain ATCC BAA-871 / DC3000), this protein is Glutamine--fructose-6-phosphate aminotransferase [isomerizing].